The chain runs to 191 residues: Signal peptidase IB (191 aa).

Residues 1-7 (MKKELLE) lie on the Cytoplasmic side of the membrane. The chain crosses the membrane as a helical span at residues 8-28 (WIISIAVAFVILFIVGKFIVT). The Extracellular segment spans residues 29 to 191 (PYTIKGESMD…YNFNPENTKN (163 aa)). Active-site residues include Ser36 and Lys77.

This sequence belongs to the peptidase S26 family.

The protein localises to the cell membrane. It catalyses the reaction Cleavage of hydrophobic, N-terminal signal or leader sequences from secreted and periplasmic proteins.. Functionally, essential for cell viability. The protein is Signal peptidase IB (spsB) of Staphylococcus aureus (strain MRSA252).